The sequence spans 462 residues: A-type ATP synthase subunit B (462 aa).

Belongs to the ATPase alpha/beta chains family. As to quaternary structure, has multiple subunits with at least A(3), B(3), C, D, E, F, H, I and proteolipid K(x).

It is found in the cell membrane. In terms of biological role, component of the A-type ATP synthase that produces ATP from ADP in the presence of a proton gradient across the membrane. The B chain is a regulatory subunit. This Cenarchaeum symbiosum (strain A) protein is A-type ATP synthase subunit B.